We begin with the raw amino-acid sequence, 389 residues long: STE20-related kinase adapter protein alpha (389 aa).

Positions 11 to 321 constitute a Protein kinase domain; the sequence is YELLTIIGRG…AGALLNHPFF (311 aa).

It belongs to the protein kinase superfamily. STE Ser/Thr protein kinase family. STE20 subfamily. In terms of assembly, component of a trimeric complex composed of STK11/LKB1, STRAD (STRADA or STRADB) and CAB39/MO25 (CAB39/MO25alpha or CAB39L/MO25beta): the complex tethers STK11/LKB1 in the cytoplasm and stimulates its catalytic activity. In terms of tissue distribution, expressed in brain, hypothalamus, heart and skeletal muscle.

It localises to the nucleus. It is found in the cytoplasm. Pseudokinase which, in complex with CAB39/MO25 (CAB39/MO25alpha or CAB39L/MO25beta), binds to and activates STK11/LKB1. Adopts a closed conformation typical of active protein kinases and binds STK11/LKB1 as a pseudosubstrate, promoting conformational change of STK11/LKB1 in an active conformation. In Gallus gallus (Chicken), this protein is STE20-related kinase adapter protein alpha (STRADA).